We begin with the raw amino-acid sequence, 260 residues long: Ras-related protein Rab-32B (260 aa).

The disordered stretch occupies residues 11–50 (FDTDPDVSTDSNYNNNNNSNNNNSIISNSNNNNNNNNNNV). The segment covering 21 to 49 (SNYNNNNNSNNNNSIISNSNNNNNNNNNN) has biased composition (low complexity). Residue 66–73 (GDYAVGKS) coordinates GTP. Positions 88–96 (YKLTIGVDF) match the Effector region motif. GTP-binding positions include 115 to 119 (DIAGH) and 177 to 180 (NKSD). Residues 231 to 260 (TNHPPKPEEDTLELTKTNGEKSDDSKSCCK) form a disordered region. Over residues 248 to 260 (NGEKSDDSKSCCK) the composition is skewed to basic and acidic residues. Residues C258 and C259 are each lipidated (S-geranylgeranyl cysteine).

Belongs to the small GTPase superfamily. Rab family.

This is Ras-related protein Rab-32B (rab32B) from Dictyostelium discoideum (Social amoeba).